We begin with the raw amino-acid sequence, 290 residues long: Endoplasmic reticulum-Golgi intermediate compartment protein 1 (290 aa).

Residues 1-27 (MSFDVRRFDIYRKVPKDLTQPTYTGAF) lie on the Cytoplasmic side of the membrane. Residues 28-48 (ISICCCVFMLFLFLSELTGFI) form a helical membrane-spanning segment. The Lumenal portion of the chain corresponds to 49–254 (ATEIVNELYV…RRRPFYRFIT (206 aa)). Asn-74 is a glycosylation site (N-linked (GlcNAc...) asparagine). Residues 255–275 (TICAIIGGTFTVAGIIDSCIF) form a helical membrane-spanning segment. Topologically, residues 276–290 (TASEAWKKIQIGKMS) are cytoplasmic.

It belongs to the ERGIC family.

It is found in the endoplasmic reticulum membrane. The protein resides in the endoplasmic reticulum-Golgi intermediate compartment membrane. Its subcellular location is the golgi apparatus membrane. In terms of biological role, possible role in transport between endoplasmic reticulum and Golgi. In Danio rerio (Zebrafish), this protein is Endoplasmic reticulum-Golgi intermediate compartment protein 1 (ergic1).